Reading from the N-terminus, the 409-residue chain is Snake venom metalloproteinase BITM02A (409 aa).

A signal peptide spans 1–20 (MIEVLLVTICLAAFPYQGSS). A propeptide spanning residues 21 to 189 (IILESGNVND…KKASQSNLTP (169 aa)) is cleaved from the precursor. A Peptidase M12B domain is found at 193 to 389 (RYIELFIVVD…ENPQCILNKR (197 aa)). Residues Glu-196 and Asp-280 each coordinate Ca(2+). Intrachain disulfides connect Cys-304-Cys-384, Cys-344-Cys-368, and Cys-346-Cys-351. A Zn(2+)-binding site is contributed by His-329. The active site involves Glu-330. Zn(2+) contacts are provided by His-333 and His-339. The Ca(2+) site is built by Cys-384, Asn-387, Val-399, Asn-402, Leu-404, Glu-406, and Glu-409. The propeptide occupies 390-409 (LRTDTVSTPVSGNELLEAGE).

This sequence belongs to the venom metalloproteinase (M12B) family. P-I subfamily. In terms of assembly, monomer. The cofactor is Zn(2+). In terms of tissue distribution, expressed by the venom gland.

Its subcellular location is the secreted. Snake venom metalloproteinase that impairs hemostasis in the envenomed animal. The sequence is that of Snake venom metalloproteinase BITM02A from Bothrops insularis (Golden lancehead).